The primary structure comprises 1219 residues: A disintegrin and metalloproteinase with thrombospondin motifs 18 (1219 aa).

The first 47 residues, 1–47, serve as a signal peptide directing secretion; that stretch reads MECALLCLCALRAAGPGPPWGPAGLGRLAKALQLCCFCCASVAVALA. Residues 48 to 284 constitute a propeptide that is removed on maturation; it reads SDSGSSGGSG…EYGGTGRPRR (237 aa). N-linked (GlcNAc...) asparagine glycans are attached at residues Asn151 and Asn190. Residues 217 to 248 form a disordered region; it reads YPGSQRTYPGHSPSHTPPASQSQEPEYSHRRW. A compositionally biased stretch (polar residues) spans 218–241; it reads PGSQRTYPGHSPSHTPPASQSQEP. Positions 293–498 constitute a Peptidase M12B domain; sequence LNVETLVVAD…PQAGCLVDEP (206 aa). Cystine bridges form between Cys369–Cys420, Cys395–Cys402, Cys414–Cys493, Cys453–Cys477, Cys521–Cys546, Cys532–Cys553, Cys541–Cys572, Cys566–Cys577, Cys601–Cys638, Cys605–Cys643, and Cys616–Cys628. Position 436 (His436) interacts with Zn(2+). Residue Glu437 is part of the active site. 2 residues coordinate Zn(2+): His440 and His446. Residues 589–644 enclose the TSP type-1 1 domain; that stretch reads HGQWSAWSKWSECSRTCGGGVKFQERHCSNPKPQYGGKYCPGSSRIYKLCNINPCP. N-linked (GlcNAc...) asparagine glycosylation is found at Asn745, Asn838, Asn865, and Asn909. TSP type-1 domains are found at residues 931 to 990, 991 to 1049, 1052 to 1116, and 1121 to 1176; these read CPAY…NSHA, CPPE…GRCP, NRLQ…RTCP, and AVAS…NFCP. A PLAC domain is found at 1182–1219; the sequence is DDPSCVDFFSWCHLVPQHGVCNHKFYGKQCCRSCTRKS.

It depends on Zn(2+) as a cofactor. In terms of processing, the precursor is cleaved by a furin endopeptidase. Glycosylated. Can be O-fucosylated by POFUT2 on a serine or a threonine residue found within the consensus sequence C1-X(2)-(S/T)-C2-G of the TSP type-1 repeat domains where C1 and C2 are the first and second cysteine residue of the repeat, respectively. Fucosylated repeats can then be further glycosylated by the addition of a beta-1,3-glucose residue by the glucosyltransferase, B3GALTL. Fucosylation mediates the efficient secretion of ADAMTS family members. Can also be C-glycosylated with one or two mannose molecules on tryptophan residues within the consensus sequence W-X-X-W of the TPRs, and N-glycosylated. These other glycosylations can also facilitate secretion.

It is found in the secreted. The protein localises to the extracellular space. The protein resides in the extracellular matrix. The sequence is that of A disintegrin and metalloproteinase with thrombospondin motifs 18 (Adamts18) from Mus musculus (Mouse).